The primary structure comprises 369 residues: Putative agmatine deiminase 2 (369 aa).

Cys356 functions as the Amidino-cysteine intermediate in the catalytic mechanism.

This sequence belongs to the agmatine deiminase family.

It catalyses the reaction agmatine + H2O = N-carbamoylputrescine + NH4(+). The polypeptide is Putative agmatine deiminase 2 (Listeria monocytogenes serovar 1/2a (strain ATCC BAA-679 / EGD-e)).